Reading from the N-terminus, the 514-residue chain is 2,3-bisphosphoglycerate-independent phosphoglycerate mutase (514 aa).

Mn(2+)-binding residues include aspartate 13 and serine 63. The active-site Phosphoserine intermediate is serine 63. Residues histidine 124, 154-155 (RD), arginine 186, arginine 192, 258-261 (RADR), and lysine 332 each bind substrate. Positions 399, 403, 440, 441, and 459 each coordinate Mn(2+).

It belongs to the BPG-independent phosphoglycerate mutase family. In terms of assembly, monomer. Mn(2+) is required as a cofactor.

It carries out the reaction (2R)-2-phosphoglycerate = (2R)-3-phosphoglycerate. It functions in the pathway carbohydrate degradation; glycolysis; pyruvate from D-glyceraldehyde 3-phosphate: step 3/5. Its function is as follows. Catalyzes the interconversion of 2-phosphoglycerate and 3-phosphoglycerate. This chain is 2,3-bisphosphoglycerate-independent phosphoglycerate mutase, found in Legionella pneumophila (strain Lens).